The following is a 200-amino-acid chain: Serine/threonine-protein kinase mos (200 aa).

The Protein kinase domain occupies 2–200; the sequence is LCLLQPLGSG…ELLKGERVTA (199 aa). Residues 8–16 and K29 each bind ATP; that span reads LGSGGFGSV. The Proton acceptor role is filled by D143.

It belongs to the protein kinase superfamily. Ser/Thr protein kinase family.

It catalyses the reaction L-seryl-[protein] + ATP = O-phospho-L-seryl-[protein] + ADP + H(+). The enzyme catalyses L-threonyl-[protein] + ATP = O-phospho-L-threonyl-[protein] + ADP + H(+). The polypeptide is Serine/threonine-protein kinase mos (MOS) (Nycticorax nycticorax (Black-crowned night-heron)).